A 224-amino-acid chain; its full sequence is Phosphoribosylformylglycinamidine synthase subunit PurQ (224 aa).

The Glutamine amidotransferase type-1 domain maps to 4–224 (FGIIVFPGSN…ATDGLAMFIS (221 aa)). The active-site Nucleophile is the Cys87. Active-site residues include His204 and Glu206.

As to quaternary structure, part of the FGAM synthase complex composed of 1 PurL, 1 PurQ and 2 PurS subunits.

It is found in the cytoplasm. The enzyme catalyses N(2)-formyl-N(1)-(5-phospho-beta-D-ribosyl)glycinamide + L-glutamine + ATP + H2O = 2-formamido-N(1)-(5-O-phospho-beta-D-ribosyl)acetamidine + L-glutamate + ADP + phosphate + H(+). It catalyses the reaction L-glutamine + H2O = L-glutamate + NH4(+). It participates in purine metabolism; IMP biosynthesis via de novo pathway; 5-amino-1-(5-phospho-D-ribosyl)imidazole from N(2)-formyl-N(1)-(5-phospho-D-ribosyl)glycinamide: step 1/2. In terms of biological role, part of the phosphoribosylformylglycinamidine synthase complex involved in the purines biosynthetic pathway. Catalyzes the ATP-dependent conversion of formylglycinamide ribonucleotide (FGAR) and glutamine to yield formylglycinamidine ribonucleotide (FGAM) and glutamate. The FGAM synthase complex is composed of three subunits. PurQ produces an ammonia molecule by converting glutamine to glutamate. PurL transfers the ammonia molecule to FGAR to form FGAM in an ATP-dependent manner. PurS interacts with PurQ and PurL and is thought to assist in the transfer of the ammonia molecule from PurQ to PurL. The chain is Phosphoribosylformylglycinamidine synthase subunit PurQ from Synechocystis sp. (strain ATCC 27184 / PCC 6803 / Kazusa).